The chain runs to 515 residues: MASGILLNVKEEVTCPICLELLTEPLSLPCGHSFCQACITANHKESMLYKEEERSCPVCRISYQPENIQPNRHVANIVEKLREVKLSPEEGQKVDHCARHGEKLLLFCQEDSKVICWLCERSQEHRGHHTFLMEEVAQEYHVKLQTALEMLRQKQQEAEKLEADIREEKASWKIQIDYDKTNVSADFEQLREILDWEESNELQNLEKEEEDILKSLTKSETEMVQQTQYMRELISDLEHRLQGSMMELLQGVDGIIKRVENMTLKKPKTFHKNQRRVFRAPDLKGMLDMFRELTDVRRYWVDVTLAPNNISHAVIAEDKRQVSYQNPQIMYQAPGSSFGSLTNFNYCTGVLGSQSITSRKLTNFNYCTGVLGSQSITSGKHYWEVDVSKKSAWILGVCAGFQPDATYNIEQNENYQPKYGYWVIGLQEGDKYSVFQDSSSHTPFAPFIVPLSVIICPDRVGVFVDYEACTVSFFNITNHGFLIYKFSQCSFSKPVFPYLNPRKCTVPMTLCSPSS.

Alanine 2 is modified (N-acetylalanine). The RING-type zinc finger occupies cysteine 15–arginine 60. Serine 87 bears the Phosphoserine mark. Residues glutamine 92 to methionine 133 form a B box-type zinc finger. Zn(2+) is bound by residues cysteine 97, histidine 100, cysteine 119, and histidine 125. Residues alanine 137 to glutamine 225 adopt a coiled-coil conformation. A required for interaction with GABARAP and for autophagy region spans residues phenylalanine 187–asparagine 200. The B30.2/SPRY domain maps to leucine 283–serine 515.

Belongs to the TRIM/RBCC family. As to quaternary structure, can form homodimers and homotrimers. In addition to lower-order dimerization, also exhibits a higher-order multimerization and both low- and high-order multimerizations are essential for its restriction activity. Interacts with BTBD1 and BTBD2. Interacts with PSMC4, PSMC5, PSMD7 and HSPA8/HSC70. Interacts (via B30.2/SPRY domain) with HSPA1A/B. Interacts with PSMC2, MAP3K7/TAK1, TAB2 and TAB3. Interacts with SQSTM1. Interacts with TRIM6 and TRIM34. Interacts with ULK1 (phosphorylated form), GABARAP, GABARAPL1, GABARAPL2, MAP1LC3A, MAP1LC3C and BECN1. Degraded in a proteasome-independent fashion in the absence of viral infection but in a proteasome-dependent fashion following exposure to restriction sensitive virus. Post-translationally, autoubiquitinated in a RING finger- and UBE2D2-dependent manner. Monoubiquitinated by TRIM21. Deubiquitinated by Yersinia YopJ. Ubiquitination may not lead to proteasomal degradation.

The protein localises to the cytoplasm. The protein resides in the nucleus. It carries out the reaction S-ubiquitinyl-[E2 ubiquitin-conjugating enzyme]-L-cysteine + [acceptor protein]-L-lysine = [E2 ubiquitin-conjugating enzyme]-L-cysteine + N(6)-ubiquitinyl-[acceptor protein]-L-lysine.. It participates in protein modification; protein ubiquitination. In terms of biological role, capsid-specific restriction factor that prevents infection from non-host-adapted retroviruses. Blocks viral replication early in the life cycle, after viral entry but before reverse transcription. In addition to acting as a capsid-specific restriction factor, also acts as a pattern recognition receptor that activates innate immune signaling in response to the retroviral capsid lattice. Binding to the viral capsid triggers its E3 ubiquitin ligase activity, and in concert with the heterodimeric ubiquitin conjugating enzyme complex UBE2V1-UBE2N (also known as UBC13-UEV1A complex) generates 'Lys-63'-linked polyubiquitin chains, which in turn are catalysts in the autophosphorylation of the MAP3K7/TAK1 complex (includes TAK1, TAB2, and TAB3). Activation of the MAP3K7/TAK1 complex by autophosphorylation results in the induction and expression of NF-kappa-B and MAPK-responsive inflammatory genes, thereby leading to an innate immune response in the infected cell. Plays a role in regulating autophagy through activation of autophagy regulator BECN1 by causing its dissociation from its inhibitors BCL2 and TAB2. The polypeptide is Tripartite motif-containing protein 5 (TRIM5) (Chlorocebus aethiops (Green monkey)).